The primary structure comprises 1057 residues: Carbamoyl phosphate synthase large chain (1057 aa).

Positions 1–401 are carboxyphosphate synthetic domain; the sequence is MPKRDDIQTI…SLLKAIRSLE (401 aa). Positions 129, 169, 175, 176, 208, 210, 215, 241, 242, 243, 284, and 298 each coordinate ATP. In terms of domain architecture, ATP-grasp 1 spans 133–327; the sequence is RSLMNDLNVP…IAKLAAKIAV (195 aa). Glutamine 284, glutamate 298, and asparagine 300 together coordinate Mg(2+). The Mn(2+) site is built by glutamine 284, glutamate 298, and asparagine 300. The oligomerization domain stretch occupies residues 402–546; it reads YGVHHLGLPN…YGTYETENES (145 aa). Residues 547 to 929 form a carbamoyl phosphate synthetic domain region; the sequence is IVTDKEKILV…ALYKGLTGSG (383 aa). Residues 671-861 enclose the ATP-grasp 2 domain; the sequence is EALLHTIDVP…MAQLAMQAIM (191 aa). Arginine 707, arginine 746, leucine 748, glutamate 752, glycine 777, valine 778, histidine 779, serine 780, glutamine 820, and glutamate 832 together coordinate ATP. Glutamine 820, glutamate 832, and asparagine 834 together coordinate Mg(2+). 3 residues coordinate Mn(2+): glutamine 820, glutamate 832, and asparagine 834. Positions 930–1057 constitute an MGS-like domain; sequence VEVKDHGTVL…ESMTFSMRTM (128 aa). An allosteric domain region spans residues 930–1057; that stretch reads VEVKDHGTVL…ESMTFSMRTM (128 aa).

It belongs to the CarB family. As to quaternary structure, composed of two chains; the small (or glutamine) chain promotes the hydrolysis of glutamine to ammonia, which is used by the large (or ammonia) chain to synthesize carbamoyl phosphate. Tetramer of heterodimers (alpha,beta)4. It depends on Mg(2+) as a cofactor. The cofactor is Mn(2+).

The enzyme catalyses hydrogencarbonate + L-glutamine + 2 ATP + H2O = carbamoyl phosphate + L-glutamate + 2 ADP + phosphate + 2 H(+). It catalyses the reaction hydrogencarbonate + NH4(+) + 2 ATP = carbamoyl phosphate + 2 ADP + phosphate + 2 H(+). Its pathway is amino-acid biosynthesis; L-arginine biosynthesis; carbamoyl phosphate from bicarbonate: step 1/1. It functions in the pathway pyrimidine metabolism; UMP biosynthesis via de novo pathway; (S)-dihydroorotate from bicarbonate: step 1/3. Its function is as follows. Large subunit of the glutamine-dependent carbamoyl phosphate synthetase (CPSase). CPSase catalyzes the formation of carbamoyl phosphate from the ammonia moiety of glutamine, carbonate, and phosphate donated by ATP, constituting the first step of 2 biosynthetic pathways, one leading to arginine and/or urea and the other to pyrimidine nucleotides. The large subunit (synthetase) binds the substrates ammonia (free or transferred from glutamine from the small subunit), hydrogencarbonate and ATP and carries out an ATP-coupled ligase reaction, activating hydrogencarbonate by forming carboxy phosphate which reacts with ammonia to form carbamoyl phosphate. In Staphylococcus haemolyticus (strain JCSC1435), this protein is Carbamoyl phosphate synthase large chain.